The following is a 341-amino-acid chain: DNA fragmentation factor subunit beta (341 aa).

Residues 7-83 enclose the CIDE-N domain; it reads KPKTFKLRSL…LLTAGQTWQG (77 aa).

As to quaternary structure, heterodimer of DFFA and DFFB. Interacts with H1-1.

The protein localises to the cytoplasm. It localises to the nucleus. Inhibited by DFFA (DFF45). Interacts with HIST1H1A. In terms of biological role, nuclease that induces DNA fragmentation and chromatin condensation during apoptosis. Degrades naked DNA and induces apoptotic morphology. The polypeptide is DNA fragmentation factor subunit beta (DFFB) (Bos taurus (Bovine)).